The sequence spans 262 residues: Methylthioribulose-1-phosphate dehydratase (262 aa).

Residue Cys115 coordinates substrate. Zn(2+)-binding residues include His133 and His135. Residue Glu158 is the Proton donor/acceptor of the active site. His223 provides a ligand contact to Zn(2+).

The protein belongs to the aldolase class II family. MtnB subfamily. Zn(2+) serves as cofactor.

The protein resides in the cytoplasm. It catalyses the reaction 5-(methylsulfanyl)-D-ribulose 1-phosphate = 5-methylsulfanyl-2,3-dioxopentyl phosphate + H2O. Its pathway is amino-acid biosynthesis; L-methionine biosynthesis via salvage pathway; L-methionine from S-methyl-5-thio-alpha-D-ribose 1-phosphate: step 2/6. Its function is as follows. Catalyzes the dehydration of methylthioribulose-1-phosphate (MTRu-1-P) into 2,3-diketo-5-methylthiopentyl-1-phosphate (DK-MTP-1-P). This Meyerozyma guilliermondii (strain ATCC 6260 / CBS 566 / DSM 6381 / JCM 1539 / NBRC 10279 / NRRL Y-324) (Yeast) protein is Methylthioribulose-1-phosphate dehydratase.